We begin with the raw amino-acid sequence, 368 residues long: Phospho-N-acetylmuramoyl-pentapeptide-transferase (368 aa).

A run of 9 helical transmembrane segments spans residues 2-22 (IALIIGMLVSLIVTLVGTPLL), 51-71 (TLGGVVINFAILLGWASSALY), 80-100 (PSWSAALVLFAMLSMGLLGFI), 117-137 (GGKFIGQFIFATIYAVLALLI), 167-187 (VAIILFVIWVNFLMTAWTNAV), 193-213 (LDGLAAGSSMIAFTGFGIIAF), 234-254 (PLDLTVIAVCAAVACFGFLWY), 271-291 (LGGLFAALSIATHTEFLAVVL), and 340-360 (FWMIELIFVLLALTIFYGDWV).

Belongs to the glycosyltransferase 4 family. MraY subfamily. The cofactor is Mg(2+).

The protein localises to the cell membrane. The catalysed reaction is UDP-N-acetyl-alpha-D-muramoyl-L-alanyl-gamma-D-glutamyl-meso-2,6-diaminopimeloyl-D-alanyl-D-alanine + di-trans,octa-cis-undecaprenyl phosphate = di-trans,octa-cis-undecaprenyl diphospho-N-acetyl-alpha-D-muramoyl-L-alanyl-D-glutamyl-meso-2,6-diaminopimeloyl-D-alanyl-D-alanine + UMP. Its pathway is cell wall biogenesis; peptidoglycan biosynthesis. In terms of biological role, catalyzes the initial step of the lipid cycle reactions in the biosynthesis of the cell wall peptidoglycan: transfers peptidoglycan precursor phospho-MurNAc-pentapeptide from UDP-MurNAc-pentapeptide onto the lipid carrier undecaprenyl phosphate, yielding undecaprenyl-pyrophosphoryl-MurNAc-pentapeptide, known as lipid I. This chain is Phospho-N-acetylmuramoyl-pentapeptide-transferase, found in Bifidobacterium longum (strain DJO10A).